The sequence spans 545 residues: CTP synthase (545 aa).

Residues 1-265 (MSRFIFVTGG…DAIVVEKFGL (265 aa)) form an amidoligase domain region. Position 13 (Ser13) interacts with CTP. Ser13 lines the UTP pocket. 14 to 19 (SLGKGI) contacts ATP. Tyr54 is an L-glutamine binding site. Asp71 contributes to the ATP binding site. Positions 71 and 139 each coordinate Mg(2+). CTP contacts are provided by residues 146 to 148 (DIE), 186 to 191 (KTKPTQ), and Lys222. Residues 186-191 (KTKPTQ) and Lys222 contribute to the UTP site. The 252-residue stretch at 290–541 (TVGMVGKYIE…VAAALAEQKA (252 aa)) folds into the Glutamine amidotransferase type-1 domain. Residue Gly351 participates in L-glutamine binding. Cys378 (nucleophile; for glutamine hydrolysis) is an active-site residue. L-glutamine is bound by residues 379–382 (LGMQ), Glu402, and Arg469. Residues His514 and Glu516 contribute to the active site.

It belongs to the CTP synthase family. In terms of assembly, homotetramer.

The catalysed reaction is UTP + L-glutamine + ATP + H2O = CTP + L-glutamate + ADP + phosphate + 2 H(+). It carries out the reaction L-glutamine + H2O = L-glutamate + NH4(+). The enzyme catalyses UTP + NH4(+) + ATP = CTP + ADP + phosphate + 2 H(+). It participates in pyrimidine metabolism; CTP biosynthesis via de novo pathway; CTP from UDP: step 2/2. With respect to regulation, allosterically activated by GTP, when glutamine is the substrate; GTP has no effect on the reaction when ammonia is the substrate. The allosteric effector GTP functions by stabilizing the protein conformation that binds the tetrahedral intermediate(s) formed during glutamine hydrolysis. Inhibited by the product CTP, via allosteric rather than competitive inhibition. In terms of biological role, catalyzes the ATP-dependent amination of UTP to CTP with either L-glutamine or ammonia as the source of nitrogen. Regulates intracellular CTP levels through interactions with the four ribonucleotide triphosphates. The polypeptide is CTP synthase (Alcanivorax borkumensis (strain ATCC 700651 / DSM 11573 / NCIMB 13689 / SK2)).